Here is a 1609-residue protein sequence, read N- to C-terminus: MVAKKTVRSYRSSFSHSVIVAILSAGIAFEAHSLHSSELDLGVFNKQFEEHSAHVEEAQTSVLKGSDPVNPSQKESEKVLYTQVPLTQGSSGESLDLADANFLEHFQHLFEETTVFGIDQKLVWSDLDTRNFSQPTQEPDTSNAVSEKISSDTKENRKDLETEDPSKKSGLKEVSSDLPKSPETAVAAISEDLEISENISARDPLQGLAFFYKNTSSQSISEKDSSFQGIIFSGSGANSGLGFENLKAPKSGAAVYSDRDIVFENLVKGLSFISCESLEDGSAAGVNIVVTHCGDVTLTDCATGLDLEALRLVKDFSRGGAVFTARNHEVQNNLAGGILSVVGNKGAIVVEKNSAEKSNGGAFACGSFVYSNNENTALWKENQALSGGAISSASDIDIQGNCSAIEFSGNQSLIALGEHIGLTDFVGGGALAAQGTLTLRNNAVVQCVKNTSKTHGGAILAGTVDLNETISEVAFKQNTAALTGGALSANDKVIIANNFGEILFEQNEVRNHGGAIYCGCRSNPKLEQKDSGENINIIGNSGAITFLKNKASVLEVMTQAEDYAGGGALWGHNVLLDSNSGNIQFIGNIGGSTFWIGEYVGGGAILSTDRVTISNNSGDVVFKGNKGQCLAQKYVAPQETAPVESDASSTNKDEKSLNACSHGDHYPPKTVEEEVPPSLLEEHPVVSSTDIRGGGAILAQHIFITDNTGNLRFSGNLGGGEESSTVGDLAIVGGGALLSTNEVNVCSNQNVVFSDNVTSNGCDSGGAILAKKVDISANHSVEFVSNGSGKFGGAVCALNESVNITDNGSAVSFSKNRTRLGGAGVAAPQGSVTICGNQGNIAFKENFVFGSENQRSGGGAIIANSSVNIQDNAGDILFVSNSTGSYGGAIFVGSLVASEGSNPRTLTITGNSGDILFAKNSTQTAASLSEKDSFGGGAIYTQNLKIVKNAGNVSFYGNRAPSGAGVQIADGGTVCLEAFGGDILFEGNINFDGSFNAIHLCGNDSKIVELSAVQDKNIIFQDAITYEENTIRGLPDKDVSPLSAPSLIFNSKPQDDSAQHHEGTIRFSRGVSKIPQIAAIQEGTLALSQNAELWLAGLKQETGSSIVLSAGSILRIFDSQVDSSAPLPTENKEETLVSAGVQINMSSPTPNKDKAVDTPVLADIISITVDLSSFVPEQDGTLPLPPEIIIPKGTKLHSNAIDLKIIDPTNVGYENHALLSSHKDIPLISLKTAEGMTGTPTADASLSNIKIDVSLPSITPATYGHTGVWSESKMEDGRLVVGWQPTGYKLNPEKQGALVLNNLWSHYTDLRALKQEIFAHHTIAQRMELDFSTNVWGSGLGVVEDCQNIGEFDGFKHHLTGYALGLDTQLVEDFLIGGCFSQFFGKTESQSYKAKNDVKSYMGAAYAGILAGPWLIKGAFVYGNINNDLTTDYGTLGISTGSWIGKGFIAGTSIDYRYIVNPRRFISAIVSTVVPFVEAEYVRIDLPEISEQGKEVRTFQKTRFENVAIPFGFALEHAYSRGSRAEVNSVQLAYVFDVYRKGPVSLITLKDAAYSWKSYGVDIPCKAWKARLSNNTEWNSYLSTYLAFNYEWREDLIAYDFNGGIRIIF.

The signal sequence occupies residues 1–30 (MVAKKTVRSYRSSFSHSVIVAILSAGIAFE). Residues 132-145 (FSQPTQEPDTSNAV) are compositionally biased toward polar residues. 2 disordered regions span residues 132–183 (FSQP…KSPE) and 640–677 (TAPV…EVPP). 2 stretches are compositionally biased toward basic and acidic residues: residues 149–175 (ISSD…KEVS) and 651–672 (NKDE…KTVE). Residues 1328-1609 (ELDFSTNVWG…DFNGGIRIIF (282 aa)) form the Autotransporter domain.

This sequence belongs to the PMP outer membrane protein family.

It is found in the secreted. The protein resides in the cell wall. The protein localises to the cell outer membrane. The chain is Probable outer membrane protein pmp21 (pmp21) from Chlamydia pneumoniae (Chlamydophila pneumoniae).